The sequence spans 417 residues: Phosphoglycerate kinase (417 aa).

Valine 23, aspartate 24, phenylalanine 25, asparagine 26, glutamine 38, arginine 39, serine 62, histidine 63, glycine 65, arginine 66, leucine 122, arginine 123, histidine 170, and arginine 171 together coordinate (2R)-3-phosphoglycerate. ADP is bound at residue glycine 214. Residue glycine 214 participates in CDP binding. Residues alanine 215 and lysine 216 each coordinate AMP. Position 215 (alanine 215) interacts with ATP. Alanine 215 contributes to the Mg(2+) binding site. Residue aspartate 219 participates in CDP binding. Mg(2+) is bound at residue aspartate 219. Lysine 220 is a binding site for AMP. Position 220 (lysine 220) interacts with ATP. Residue glycine 238 participates in ADP binding. Glycine 238 contributes to the CDP binding site. AMP is bound by residues glycine 239 and glycine 313. Glycine 239 and glycine 313 together coordinate ATP. Residues glycine 338, valine 340, and phenylalanine 343 each coordinate CDP. An ADP-binding site is contributed by phenylalanine 343. Glutamate 344 contributes to the AMP binding site. ATP-binding residues include glutamate 344, aspartate 375, and threonine 376. Aspartate 375 lines the Mg(2+) pocket.

This sequence belongs to the phosphoglycerate kinase family. Monomer. Requires Mg(2+) as cofactor.

It localises to the cytoplasm. The catalysed reaction is (2R)-3-phosphoglycerate + ATP = (2R)-3-phospho-glyceroyl phosphate + ADP. It participates in carbohydrate degradation; glycolysis; pyruvate from D-glyceraldehyde 3-phosphate: step 2/5. Its function is as follows. Catalyzes one of the two ATP producing reactions in the glycolytic pathway via the reversible conversion of 1,3-diphosphoglycerate to 3-phosphoglycerate. In addition to its role as a glycolytic enzyme, it seems that PGK-1 acts as a polymerase alpha cofactor protein (primer recognition protein). May play a role in sperm motility. This is Phosphoglycerate kinase (PGK) from Gallus gallus (Chicken).